Consider the following 405-residue polypeptide: Mitochondrial outer membrane protein SLC25A46 (405 aa).

Residues 1 to 77 (MTSRRPDSFE…PDEAQSAAPP (77 aa)) are disordered. Low complexity predominate over residues 22–37 (FSGGYSGRSFNNSSSS). The Solcar 1 repeat unit spans residues 80–171 (QLNRFAGFGI…GIISECTPLP (92 aa)). A run of 6 helical transmembrane segments spans residues 87-107 (FGIG…CIVF), 151-171 (FVVQ…TPLP), 183-203 (VVGH…FYSA), 242-262 (LLPL…HYII), 302-322 (FPEL…LFPL), and 371-391 (MGFY…ATVL). A Solcar 2 repeat occupies 299–401 (DAYFPELMAS…QITKMIYSTL (103 aa)).

It belongs to the mitochondrial carrier (TC 2.A.29) family.

The protein resides in the mitochondrion outer membrane. In terms of biological role, transmembrane protein of the mitochondrial outer membrane that controls mitochondrial organization. May regulate the biogenesis and dynamics of mitochondrial cristae, the inwards folds of the inner mitochondrial membrane. Could regulate mitochondrial lipid homeostasis and thereby mitochondrial fission. The polypeptide is Mitochondrial outer membrane protein SLC25A46 (slc25a46) (Danio rerio (Zebrafish)).